The chain runs to 503 residues: MITSTRLPQNHPEELYAAVDLGSNSFHLVIVRVVAGSVQIIGKVKQKVRLAAGLDDNMMLDNESLERGWRCLETFAERLQDIPRDNIRVVATATLRLAKNADVFTVKAQQILDHTLSVISGEEEARQIYLGVAYTSANQGNSLVIDIGGASTEIIIGNDMTPIHLVSLNMGCVTFKERHFAGDVLSEENFAAAIDAAKAMVDAVADKFVCFDWQQCLGASGTPQAITEILVAQGISDAIRLDYLYNLRQQCIDCSTLDNLIIDGLDESRRIIFPSGLAILIALFESLSIRDMQISGGALREGLIYGMLENMQQNDRRMQTIHQHMQHFHIDSEQAERVTEVALTLFKQLSEQTDVDGIDGEAMLVAAAMLHETGLHIEYKLHHKHGAYILGHVPMVGYTNLQRDGIKTLVLNHRQQISPEVFDQNHSETRGIMRSLVRVLRLACILSIRRKDNLLPQFCLEVEENDWRLVFPEGWLKAHPLIDAELANEKWQQHKMGWHLTCE.

It belongs to the GppA/Ppx family. GppA subfamily.

The enzyme catalyses guanosine 3'-diphosphate 5'-triphosphate + H2O = guanosine 3',5'-bis(diphosphate) + phosphate + H(+). It participates in purine metabolism; ppGpp biosynthesis; ppGpp from GTP: step 2/2. Its function is as follows. Catalyzes the conversion of pppGpp to ppGpp. Guanosine pentaphosphate (pppGpp) is a cytoplasmic signaling molecule which together with ppGpp controls the 'stringent response', an adaptive process that allows bacteria to respond to amino acid starvation, resulting in the coordinated regulation of numerous cellular activities. The protein is Guanosine-5'-triphosphate,3'-diphosphate pyrophosphatase of Pseudoalteromonas atlantica (strain T6c / ATCC BAA-1087).